Reading from the N-terminus, the 447-residue chain is Phosphoglucosamine mutase (447 aa).

The active-site Phosphoserine intermediate is the Ser100. Mg(2+)-binding residues include Ser100, Asp239, Asp241, and Asp243. Ser100 carries the phosphoserine modification.

The protein belongs to the phosphohexose mutase family. Mg(2+) is required as a cofactor. Post-translationally, activated by phosphorylation.

The catalysed reaction is alpha-D-glucosamine 1-phosphate = D-glucosamine 6-phosphate. In terms of biological role, catalyzes the conversion of glucosamine-6-phosphate to glucosamine-1-phosphate. The polypeptide is Phosphoglucosamine mutase (Halalkalibacterium halodurans (strain ATCC BAA-125 / DSM 18197 / FERM 7344 / JCM 9153 / C-125) (Bacillus halodurans)).